Reading from the N-terminus, the 419-residue chain is Carboxypeptidase A1 (419 aa).

Residues 1 to 16 (MQGLLILSVLLGAALG) form the signal peptide. Residues 17–110 (KEDFVGHQVL…QEQMFASQSR (94 aa)) constitute a propeptide, activation peptide. Positions 121-414 (TYHTLDEIYD…LGVLTIMEHT (294 aa)) constitute a Peptidase M14 domain. Zn(2+) is bound by residues H179 and E182. Residues 179 to 182 (HSRE), R237, and 254 to 255 (NR) each bind substrate. An intrachain disulfide couples C248 to C271. H306 lines the Zn(2+) pocket. Substrate is bound by residues 307-308 (SY) and Y358. The active-site Proton donor/acceptor is E380.

Belongs to the peptidase M14 family. Monomer. May form a complex with proelastase 2. Requires Zn(2+) as cofactor. As to expression, pancreas.

It localises to the secreted. It catalyses the reaction Release of a C-terminal amino acid, but little or no action with -Asp, -Glu, -Arg, -Lys or -Pro.. The enzyme catalyses leukotriene C4 + H2O = leukotriene F4 + glycine. With respect to regulation, inhibited by interaction with the S.magnifica carboxypeptidase inhibitor SmCI. Functionally, carboxypeptidase that catalyzes the release of a C-terminal amino acid, but has little or no action with -Asp, -Glu, -Arg, -Lys or -Pro. Catalyzes the conversion of leukotriene C4 to leukotriene F4 via the hydrolysis of an amide bond. This chain is Carboxypeptidase A1 (CPA1), found in Bos taurus (Bovine).